The following is a 138-amino-acid chain: MRTLWIMAVLLVGVDGSLVQLWKMIFQETGKEAAKNYGLYGCNCGVGRRGKPKDATDSCCYVHKCCYKKVTGCNPKMDSYSYSWKNKAIVCGEKNPPCLKQVCECDKAVAICLRENLGTYNKKYTIYPKPFCKKADTC.

Positions 1–16 (MRTLWIMAVLLVGVDG) are cleaved as a signal peptide. 7 cysteine pairs are disulfide-bonded: Cys42–Cys132, Cys44–Cys60, Cys59–Cys112, Cys65–Cys138, Cys66–Cys105, Cys73–Cys98, and Cys91–Cys103. Residues Gly45 and Gly47 each contribute to the Ca(2+) site. His63 is a catalytic residue. Asp106 is a catalytic residue.

Belongs to the phospholipase A2 family. Group II subfamily. K49 sub-subfamily. In terms of assembly, exists as a monomer in both solution and crystal states. In the presence of SDS or probably in the presence of phospholipids, assembles to form SDS-resistant stable oligomers. Ca(2+) serves as cofactor. As to expression, expressed by the venom gland.

It localises to the secreted. It carries out the reaction a 1,2-diacyl-sn-glycero-3-phosphocholine + H2O = a 1-acyl-sn-glycero-3-phosphocholine + a fatty acid + H(+). In terms of biological role, snake venom phospholipase A2 (PLA2) that shows anticoagulant activities, strong myolytic activity, infiltration of polymorphonuclear cells, and edema in stromal tissues. Induces cell death of Jurkat cells in a concentration-dependent manner. Shows a low phospholipase A2 activity. PLA2 catalyzes the calcium-dependent hydrolysis of the 2-acyl groups in 3-sn-phosphoglycerides. The protein is Basic phospholipase A2 BP-II of Protobothrops flavoviridis (Habu).